A 1086-amino-acid chain; its full sequence is 1,2-beta-oligoglucan phosphorylase (1086 aa).

Asp-741 functions as the Proton donor in the catalytic mechanism.

It belongs to the glycosyl hydrolase 94 family. Monomer.

It carries out the reaction [(1-&gt;2)-beta-D-glucosyl](n) + phosphate = [(1-&gt;2)-beta-D-glucosyl](n-1) + alpha-D-glucose 1-phosphate. Catalyzes the reversible phosphorolysis of beta-(1-&gt;2)-D-glucans. The minimum length of the substrate for the phosphorolytic reaction is 3 D-glucose units. The polypeptide is 1,2-beta-oligoglucan phosphorylase (Listeria innocua serovar 6a (strain ATCC BAA-680 / CLIP 11262)).